Here is a 434-residue protein sequence, read N- to C-terminus: Transcriptional enhancer factor TEF-3 (434 aa).

A compositionally biased stretch (polar residues) spans methionine 1–serine 28. Disordered regions lie at residues methionine 1–valine 42 and glutamine 188–glutamine 215. A DNA-binding region (TEA) is located at residues aspartate 36 to glutamate 112. The segment covering glycine 201–proline 213 has biased composition (pro residues).

As to quaternary structure, interacts with YAP1 and WWTR1/TAZ. As to expression, preferentially expressed in skeletal muscle. Lower levels in pancreas, placenta, and heart.

Its subcellular location is the nucleus. In terms of biological role, transcription factor which plays a key role in the Hippo signaling pathway, a pathway involved in organ size control and tumor suppression by restricting proliferation and promoting apoptosis. The core of this pathway is composed of a kinase cascade wherein MST1/MST2, in complex with its regulatory protein SAV1, phosphorylates and activates LATS1/2 in complex with its regulatory protein MOB1, which in turn phosphorylates and inactivates YAP1 oncoprotein and WWTR1/TAZ. Acts by mediating gene expression of YAP1 and WWTR1/TAZ, thereby regulating cell proliferation, migration and epithelial mesenchymal transition (EMT) induction. Binds specifically and non-cooperatively to the Sph and GT-IIC 'enhansons' (5'-GTGGAATGT-3') and activates transcription. Binds to the M-CAT motif. The sequence is that of Transcriptional enhancer factor TEF-3 (TEAD4) from Homo sapiens (Human).